We begin with the raw amino-acid sequence, 299 residues long: Ethylmalonyl-CoA decarboxylase (299 aa).

The protein belongs to the enoyl-CoA hydratase/isomerase family.

The protein localises to the cytoplasm. The protein resides in the cytosol. It carries out the reaction (2S)-ethylmalonyl-CoA + H(+) = butanoyl-CoA + CO2. The enzyme catalyses (S)-methylmalonyl-CoA + H(+) = propanoyl-CoA + CO2. It catalyses the reaction (2R)-ethylmalonyl-CoA + H(+) = butanoyl-CoA + CO2. In terms of biological role, decarboxylates ethylmalonyl-CoA, a potentially toxic metabolite, to form butyryl-CoA, suggesting it might be involved in metabolite proofreading. Acts preferentially on (S)-ethylmalonyl-CoA but also has some activity on the (R)-isomer. Also has methylmalonyl-CoA decarboxylase activity at lower level. In Xenopus tropicalis (Western clawed frog), this protein is Ethylmalonyl-CoA decarboxylase (echdc1).